The chain runs to 609 residues: Glutamine--fructose-6-phosphate aminotransferase [isomerizing] (609 aa).

Cysteine 2 acts as the Nucleophile; for GATase activity in catalysis. A Glutamine amidotransferase type-2 domain is found at 2–219 (CGIFGYIGAK…SGELAVVGLG (218 aa)). SIS domains follow at residues 280–426 (ISEK…LKQT) and 458–599 (WAND…IDRP). Residue lysine 604 is the For Fru-6P isomerization activity of the active site.

As to quaternary structure, homodimer.

It localises to the cytoplasm. It carries out the reaction D-fructose 6-phosphate + L-glutamine = D-glucosamine 6-phosphate + L-glutamate. Catalyzes the first step in hexosamine metabolism, converting fructose-6P into glucosamine-6P using glutamine as a nitrogen source. The polypeptide is Glutamine--fructose-6-phosphate aminotransferase [isomerizing] (Chlamydia caviae (strain ATCC VR-813 / DSM 19441 / 03DC25 / GPIC) (Chlamydophila caviae)).